A 320-amino-acid polypeptide reads, in one-letter code: Cytochrome f (320 aa).

An N-terminal signal peptide occupies residues 1-35 (MQNRNTFSWIKEQMTRSISVSIMIYVITRTAISNA). Residues Tyr36, Cys56, Cys59, and His60 each coordinate heme. Residues 286 to 306 (VQGLLFFLASVILAQIFLVLK) traverse the membrane as a helical segment.

Belongs to the cytochrome f family. In terms of assembly, the 4 large subunits of the cytochrome b6-f complex are cytochrome b6, subunit IV (17 kDa polypeptide, petD), cytochrome f and the Rieske protein, while the 4 small subunits are PetG, PetL, PetM and PetN. The complex functions as a dimer. It depends on heme as a cofactor.

It is found in the plastid. Its subcellular location is the chloroplast thylakoid membrane. Component of the cytochrome b6-f complex, which mediates electron transfer between photosystem II (PSII) and photosystem I (PSI), cyclic electron flow around PSI, and state transitions. This chain is Cytochrome f, found in Platanus occidentalis (Sycamore).